Consider the following 448-residue polypeptide: Probable metal transport system membrane protein CPn_0347/CP_0413/CPj0347/CpB0354 (448 aa).

8 helical membrane passes run 15-35 (FLAV…LLIS), 47-67 (ASYP…SLQA), 69-89 (IFWI…IIVF), 100-120 (SALC…ASYV), 144-164 (FLEA…LWWW), 193-213 (LIFI…VLIS), 233-253 (ILIL…YISV), and 270-290 (LPTG…CLLF).

This sequence belongs to the ABC-3 integral membrane protein family.

It is found in the cell inner membrane. In terms of biological role, part of an ATP-driven transport system CPn_0346/CPn_0347/CPn_0348/CPn_0349 for a metal. This is Probable metal transport system membrane protein CPn_0347/CP_0413/CPj0347/CpB0354 from Chlamydia pneumoniae (Chlamydophila pneumoniae).